The primary structure comprises 858 residues: Bifunctional uridylyltransferase/uridylyl-removing enzyme (858 aa).

The interval 1-324 (MSASVAEPPP…PATSGVTRVL (324 aa)) is uridylyltransferase. Residues 325–681 (SPGRFVEKQG…ARPSPVGDAL (357 aa)) form a uridylyl-removing region. Residues 443 to 565 (VDQHILMVLR…VGSERRLTAL (123 aa)) form the HD domain. ACT domains are found at residues 682-761 (QVLV…PEPS) and 790-858 (ILSV…AIAV).

It belongs to the GlnD family. The cofactor is Mg(2+).

It catalyses the reaction [protein-PII]-L-tyrosine + UTP = [protein-PII]-uridylyl-L-tyrosine + diphosphate. The enzyme catalyses [protein-PII]-uridylyl-L-tyrosine + H2O = [protein-PII]-L-tyrosine + UMP + H(+). With respect to regulation, uridylyltransferase (UTase) activity is inhibited by glutamine, while glutamine activates uridylyl-removing (UR) activity. In terms of biological role, modifies, by uridylylation and deuridylylation, the PII regulatory proteins (GlnB and homologs), in response to the nitrogen status of the cell that GlnD senses through the glutamine level. Under low glutamine levels, catalyzes the conversion of the PII proteins and UTP to PII-UMP and PPi, while under higher glutamine levels, GlnD hydrolyzes PII-UMP to PII and UMP (deuridylylation). Thus, controls uridylylation state and activity of the PII proteins, and plays an important role in the regulation of nitrogen assimilation and metabolism. This Burkholderia mallei (strain ATCC 23344) protein is Bifunctional uridylyltransferase/uridylyl-removing enzyme.